Consider the following 209-residue polypeptide: uncharacterized protein (209 aa).

This is an uncharacterized protein from Magallana gigas (Pacific oyster).